The chain runs to 1391 residues: DNA-directed RNA polymerase subunit beta' (1391 aa).

Zn(2+) contacts are provided by C72, C74, C87, and C90. Positions 462, 464, and 466 each coordinate Mg(2+). Residues C816, C890, C897, and C900 each contribute to the Zn(2+) site.

The protein belongs to the RNA polymerase beta' chain family. In terms of assembly, the RNAP catalytic core consists of 2 alpha, 1 beta, 1 beta' and 1 omega subunit. When a sigma factor is associated with the core the holoenzyme is formed, which can initiate transcription. It depends on Mg(2+) as a cofactor. The cofactor is Zn(2+).

The enzyme catalyses RNA(n) + a ribonucleoside 5'-triphosphate = RNA(n+1) + diphosphate. In terms of biological role, DNA-dependent RNA polymerase catalyzes the transcription of DNA into RNA using the four ribonucleoside triphosphates as substrates. The polypeptide is DNA-directed RNA polymerase subunit beta' (Neisseria gonorrhoeae (strain NCCP11945)).